The following is a 382-amino-acid chain: Succinyl-diaminopimelate desuccinylase (382 aa).

H72 is a Zn(2+) binding site. Residue D74 is part of the active site. Residue D105 coordinates Zn(2+). The Proton acceptor role is filled by E139. Zn(2+) is bound by residues E140, E168, and H354.

This sequence belongs to the peptidase M20A family. DapE subfamily. Homodimer. Zn(2+) serves as cofactor. The cofactor is Co(2+).

It carries out the reaction N-succinyl-(2S,6S)-2,6-diaminopimelate + H2O = (2S,6S)-2,6-diaminopimelate + succinate. The protein operates within amino-acid biosynthesis; L-lysine biosynthesis via DAP pathway; LL-2,6-diaminopimelate from (S)-tetrahydrodipicolinate (succinylase route): step 3/3. In terms of biological role, catalyzes the hydrolysis of N-succinyl-L,L-diaminopimelic acid (SDAP), forming succinate and LL-2,6-diaminopimelate (DAP), an intermediate involved in the bacterial biosynthesis of lysine and meso-diaminopimelic acid, an essential component of bacterial cell walls. This chain is Succinyl-diaminopimelate desuccinylase, found in Shewanella amazonensis (strain ATCC BAA-1098 / SB2B).